The following is a 572-amino-acid chain: Proline--tRNA ligase (572 aa).

The protein belongs to the class-II aminoacyl-tRNA synthetase family. ProS type 1 subfamily. Homodimer.

The protein localises to the cytoplasm. The catalysed reaction is tRNA(Pro) + L-proline + ATP = L-prolyl-tRNA(Pro) + AMP + diphosphate. Catalyzes the attachment of proline to tRNA(Pro) in a two-step reaction: proline is first activated by ATP to form Pro-AMP and then transferred to the acceptor end of tRNA(Pro). As ProRS can inadvertently accommodate and process non-cognate amino acids such as alanine and cysteine, to avoid such errors it has two additional distinct editing activities against alanine. One activity is designated as 'pretransfer' editing and involves the tRNA(Pro)-independent hydrolysis of activated Ala-AMP. The other activity is designated 'posttransfer' editing and involves deacylation of mischarged Ala-tRNA(Pro). The misacylated Cys-tRNA(Pro) is not edited by ProRS. The protein is Proline--tRNA ligase of Bacillus licheniformis (strain ATCC 14580 / DSM 13 / JCM 2505 / CCUG 7422 / NBRC 12200 / NCIMB 9375 / NCTC 10341 / NRRL NRS-1264 / Gibson 46).